Here is a 523-residue protein sequence, read N- to C-terminus: Probable methylmalonate-semialdehyde/malonate-semialdehyde dehydrogenase [acylating], mitochondrial (523 aa).

A mitochondrion-targeting transit peptide spans 1–22 (MLSRLARVQPKCQQLAHFSTSK). NAD(+) is bound by residues phenylalanine 175, lysine 199, and glutamate 202. The active-site Nucleophile is cysteine 307. Glutamate 407 contacts NAD(+).

It belongs to the aldehyde dehydrogenase family. Homodimer.

Its subcellular location is the mitochondrion. The enzyme catalyses 2-methyl-3-oxopropanoate + NAD(+) + CoA + H2O = propanoyl-CoA + hydrogencarbonate + NADH + H(+). It catalyses the reaction 3-oxopropanoate + NAD(+) + CoA + H2O = hydrogencarbonate + acetyl-CoA + NADH + H(+). In terms of biological role, probable malonate and methylmalonate semialdehyde dehydrogenase involved in the catabolism of valine, thymine, and compounds catabolized by way of beta-alanine, including uracil and cytidine. The chain is Probable methylmalonate-semialdehyde/malonate-semialdehyde dehydrogenase [acylating], mitochondrial (alh-8) from Caenorhabditis elegans.